The primary structure comprises 545 residues: Lysine--tRNA ligase (545 aa).

The 'HIGH' region motif lies at 33 to 41; it reads VSGLQHIGR. The 'KMSKS' region signature appears at 288 to 292; that stretch reads DMSSS.

The protein belongs to the class-I aminoacyl-tRNA synthetase family.

The protein localises to the cytoplasm. It carries out the reaction tRNA(Lys) + L-lysine + ATP = L-lysyl-tRNA(Lys) + AMP + diphosphate. This is Lysine--tRNA ligase (lysS) from Aeropyrum pernix (strain ATCC 700893 / DSM 11879 / JCM 9820 / NBRC 100138 / K1).